The sequence spans 244 residues: Probable ABC transporter ATP-binding protein p29 (244 aa).

The ABC transporter domain occupies Leu-6–Ile-241. Residue Gly-38–Thr-45 participates in ATP binding.

Belongs to the ABC transporter superfamily.

Functionally, part of a high-affinity transport system. The protein is Probable ABC transporter ATP-binding protein p29 (p29) of Mycoplasma pneumoniae (strain ATCC 29342 / M129 / Subtype 1) (Mycoplasmoides pneumoniae).